The sequence spans 152 residues: Endoribonuclease YbeY (152 aa).

Zn(2+) contacts are provided by histidine 112, histidine 116, and histidine 122.

The protein belongs to the endoribonuclease YbeY family. Zn(2+) is required as a cofactor.

Its subcellular location is the cytoplasm. Single strand-specific metallo-endoribonuclease involved in late-stage 70S ribosome quality control and in maturation of the 3' terminus of the 16S rRNA. The chain is Endoribonuclease YbeY from Pseudoalteromonas translucida (strain TAC 125).